The following is a 306-amino-acid chain: OVARIAN TUMOR DOMAIN-containing deubiquitinating enzyme 1 (306 aa).

Positions 81–295 (IGIRRTRGDG…PGHYDILYPK (215 aa)) constitute an OTU domain. Residue D89 is part of the active site. The Nucleophile role is filled by C92. Active-site residues include H259 and H288.

This sequence belongs to the peptidase C65 family.

It carries out the reaction Thiol-dependent hydrolysis of ester, thioester, amide, peptide and isopeptide bonds formed by the C-terminal Gly of ubiquitin (a 76-residue protein attached to proteins as an intracellular targeting signal).. Its activity is regulated as follows. Cleavage activities for 'Lys-48'- and 'Lys-63'-linked ubiquitin (UB) tetramers is inhibited by UB aldehyde and N-ethylmaleimide but not by the metalloprotease inhibitors 1,10-phenanthroline and EDTA, and the serine protease inhibitor phenylmethylsulfonyl fluoride. Its function is as follows. Hydrolase that can remove conjugated ubiquitin from proteins in vitro and may therefore play an important regulatory role at the level of protein turnover by preventing degradation. Cysteine protease with a preference for Met-1 and 'Lys-48' over 'Lys-63'-linked ubiquitin (UB) tetramers (e.g. Ub2, Ub3 and Ub4) as substrates. This Arabidopsis thaliana (Mouse-ear cress) protein is OVARIAN TUMOR DOMAIN-containing deubiquitinating enzyme 1.